We begin with the raw amino-acid sequence, 940 residues long: UvrABC system protein A (940 aa).

Residue 31 to 38 coordinates ATP; the sequence is GLSGSGKS. The segment at 253-280 adopts a C4-type zinc-finger fold; sequence CPICGYSMRELEPRLFSFNNPAGACPTC. 2 consecutive ABC transporter domains span residues 310 to 587 and 607 to 937; these read WDRR…PESL and ANPE…RFLK. Residue 640 to 647 coordinates ATP; the sequence is GVSGSGKS. The C4-type zinc finger occupies 740 to 766; it reads CEACQGDGVIKVEMHFLPDIYVPCDQC.

Belongs to the ABC transporter superfamily. UvrA family. As to quaternary structure, forms a heterotetramer with UvrB during the search for lesions.

The protein localises to the cytoplasm. In terms of biological role, the UvrABC repair system catalyzes the recognition and processing of DNA lesions. UvrA is an ATPase and a DNA-binding protein. A damage recognition complex composed of 2 UvrA and 2 UvrB subunits scans DNA for abnormalities. When the presence of a lesion has been verified by UvrB, the UvrA molecules dissociate. Plays a role in recovery after DNA ADP-ribosylation. This is UvrABC system protein A from Escherichia coli O127:H6 (strain E2348/69 / EPEC).